We begin with the raw amino-acid sequence, 428 residues long: Adenylosuccinate synthetase (428 aa).

Residues 13–19 and 41–43 each bind GTP; these read GDEGKGK and GHT. Residue D14 is the Proton acceptor of the active site. Mg(2+) contacts are provided by D14 and G41. IMP contacts are provided by residues 14 to 17, 39 to 42, T130, R144, Q223, T238, and R302; these read DEGK and NAGH. H42 acts as the Proton donor in catalysis. 298–304 serves as a coordination point for substrate; it reads ASTGRRR. GTP contacts are provided by residues R304, 330–332, and 412–414; these read KLD and STG.

This sequence belongs to the adenylosuccinate synthetase family. Homodimer. It depends on Mg(2+) as a cofactor.

The protein resides in the cytoplasm. The enzyme catalyses IMP + L-aspartate + GTP = N(6)-(1,2-dicarboxyethyl)-AMP + GDP + phosphate + 2 H(+). Its pathway is purine metabolism; AMP biosynthesis via de novo pathway; AMP from IMP: step 1/2. Its function is as follows. Plays an important role in the de novo pathway of purine nucleotide biosynthesis. Catalyzes the first committed step in the biosynthesis of AMP from IMP. This chain is Adenylosuccinate synthetase, found in Dichelobacter nodosus (strain VCS1703A).